A 345-amino-acid polypeptide reads, in one-letter code: MTPPVATDAAFSHSSNGVVLSTSVDPSGTVLVIGSMTSAQSGAYQKAVEAYSGRQVEMHMVDRLTDGATSLSANTYPLAHLAVNYAEAASPVLLSSLHSALQPKAKLIVEAAELVDASTAQKVKAELIIAGFTDIQVDVATGSVSASKPATASSSFSIGSSSGSSSALPLRRKLGSGASANAKKSLWATQPASANDLIDEASLLRDADFVATTAVKRPDCDVGAGQGKKKKACKGCTCGLRELQEEEKRTANTNIVQLDTDDMDMPNADTPATTKRTEVIETIIGKDGKPKTIKRIQVDTKGATSSCGSCFLGDAFRCSSCPYLGLPAFEPGQKVEIPVGMDDDI.

The tract at residues 11–166 is N-terminal SAM-like domain; sequence FSHSSNGVVL…SIGSSSGSSS (156 aa). Residues 147-166 form a disordered region; the sequence is SKPATASSSFSIGSSSGSSS. Residues 153-166 are compositionally biased toward low complexity; sequence SSSFSIGSSSGSSS. The segment at 167-210 is linker; it reads ALPLRRKLGSGASANAKKSLWATQPASANDLIDEASLLRDADFV. Residues cysteine 220, cysteine 233, cysteine 236, and cysteine 238 each contribute to the [2Fe-2S] cluster site. Residues 220 to 238 are fe-S binding site A; that stretch reads CDVGAGQGKKKKACKGCTC. 4 residues coordinate [4Fe-4S] cluster: cysteine 307, cysteine 310, cysteine 318, and cysteine 321. 2 short sequence motifs (cx2C motif) span residues 307–310 and 318–321; these read CGSC and CSSC. The tract at residues 307 to 321 is fe-S binding site B; that stretch reads CGSCFLGDAFRCSSC.

Belongs to the anamorsin family. As to quaternary structure, monomer. Interacts with TAH18. Interacts with MIA40. [2Fe-2S] cluster is required as a cofactor. [4Fe-4S] cluster serves as cofactor.

The protein resides in the cytoplasm. It localises to the mitochondrion intermembrane space. Functionally, component of the cytosolic iron-sulfur (Fe-S) protein assembly (CIA) machinery required for the maturation of extramitochondrial Fe-S proteins. Part of an electron transfer chain functioning in an early step of cytosolic Fe-S biogenesis, facilitating the de novo assembly of a [4Fe-4S] cluster on the scaffold complex CFD1-NBP35. Electrons are transferred to DRE2 from NADPH via the FAD- and FMN-containing protein TAH18. TAH18-DRE2 are also required for the assembly of the diferric tyrosyl radical cofactor of ribonucleotide reductase (RNR), probably by providing electrons for reduction during radical cofactor maturation in the catalytic small subunit RNR2. This is Fe-S cluster assembly protein DRE2 from Mycosarcoma maydis (Corn smut fungus).